The primary structure comprises 133 residues: Large ribosomal subunit protein bL12 (133 aa).

This sequence belongs to the bacterial ribosomal protein bL12 family. Homodimer. Part of the ribosomal stalk of the 50S ribosomal subunit. Forms a multimeric L10(L12)X complex, where L10 forms an elongated spine to which 2 to 4 L12 dimers bind in a sequential fashion. Binds GTP-bound translation factors.

Its function is as follows. Forms part of the ribosomal stalk which helps the ribosome interact with GTP-bound translation factors. Is thus essential for accurate translation. The chain is Large ribosomal subunit protein bL12 from Ehrlichia chaffeensis (strain ATCC CRL-10679 / Arkansas).